The chain runs to 807 residues: Ribosome-releasing factor 2, mitochondrial (807 aa).

The transit peptide at 1-18 (MFCRKYVFQTWKQLSRSY) directs the protein to the mitochondrion. The 289-residue stretch at 27 to 315 (AKTRNIGIIA…GITKYLPSPL (289 aa)) folds into the tr-type G domain. GTP-binding positions include 36–43 (AHIDAGKT), 100–104 (DTPGH), and 154–157 (NKMD).

It belongs to the TRAFAC class translation factor GTPase superfamily. Classic translation factor GTPase family. EF-G/EF-2 subfamily.

It is found in the mitochondrion. In terms of biological role, mitochondrial GTPase that mediates the disassembly of ribosomes from messenger RNA at the termination of mitochondrial protein biosynthesis. Not involved in the GTP-dependent ribosomal translocation step during translation elongation. The sequence is that of Ribosome-releasing factor 2, mitochondrial from Candida albicans (strain SC5314 / ATCC MYA-2876) (Yeast).